Here is a 361-residue protein sequence, read N- to C-terminus: Cytosolic Fe-S cluster assembly factor CFD1 (361 aa).

37 to 44 (GKGGVGKS) lines the ATP pocket. The [4Fe-4S] cluster site is built by cysteine 218 and cysteine 221. Residues 293 to 314 (HSQSAAAQLPNSGDTESLTPAG) form a disordered region.

The protein belongs to the Mrp/NBP35 ATP-binding proteins family. NUBP2/CFD1 subfamily. In terms of assembly, heterotetramer of 2 NBP35 and 2 CFD1 chains. [4Fe-4S] cluster is required as a cofactor.

It is found in the cytoplasm. Functionally, component of the cytosolic iron-sulfur (Fe/S) protein assembly (CIA) machinery. Required for maturation of extramitochondrial Fe-S proteins. The NBP35-CFD1 heterotetramer forms a Fe-S scaffold complex, mediating the de novo assembly of an Fe-S cluster and its transfer to target apoproteins. This Mycosarcoma maydis (Corn smut fungus) protein is Cytosolic Fe-S cluster assembly factor CFD1.